A 462-amino-acid chain; its full sequence is Solute carrier family 41 member 3 (462 aa).

The next 9 helical transmembrane spans lie at 41-61, 121-141, 163-183, 194-214, 225-245, 258-278, 351-371, 380-400, and 424-444; these read CQVA…GLVM, LAVV…ASLM, VITA…IVIG, IATP…LALM, WYLT…WIFI, YGWF…LILS, VLLF…CLVE, IFVL…LYLA, and GLGD…DWLL.

Belongs to the SLC41A transporter family.

It is found in the mitochondrion inner membrane. It carries out the reaction Mg(2+)(in) + 2 Na(+)(out) = Mg(2+)(out) + 2 Na(+)(in). Its function is as follows. Na(+)/Mg(2+) ion exchanger that acts as a predominant Mg(2+) efflux system at the mitochondrial inner membrane. The protein is Solute carrier family 41 member 3 (Slc41a3) of Rattus norvegicus (Rat).